The sequence spans 335 residues: Autophagy-related protein 21 (335 aa).

WD repeat units lie at residues 165 to 205 (CHSS…LVTE) and 210 to 249 (YIPASIVSISFHPVEPFLACASENGTIHVFKISKQPSDPN).

Belongs to the WD repeat PROPPIN family.

The protein resides in the cytoplasm. The protein localises to the golgi apparatus. Its subcellular location is the golgi stack membrane. It is found in the vacuole membrane. It localises to the preautophagosomal structure membrane. In terms of biological role, required for cytoplasm to vacuole transport (Cvt) vesicles formation and autophagy. Has a role in sporulation. The protein is Autophagy-related protein 21 (mug179) of Schizosaccharomyces pombe (strain 972 / ATCC 24843) (Fission yeast).